The sequence spans 497 residues: MDEDLVVALRLQEEWDVQMARRAAAAREPVSLVDASWELVDPTPDLQALFLQFNDRFFWGQLEAVEVKWSVRMTLCAGICTYEGRGGMCSIRLSEPLLKLRPRKDLVETLLHEMIHAYLFVTNNDKDREGHGPEFCKHMHRINQLTGANITVYHTFHDEVDEYRRHWWRCNGPCQHRQPYYGYVKRATNRAPSVHDYWWADHQKTCGGTYIKIKEPENYSKKGRGKTKADKQPASAVENKDKLCRGEAQLLIPFSGKGYVLGDASTCPSAGKLNTSYMVNEAKGLSSQDHSVSGLRLNSNAEVKCEQNCLPKKPHLVSPLPTASHQSVLSSYFPRVSVANQKAFRNVNGSPVKNGTTGDGTKRPASGGSQRKVPPSRASLRNTSKVTAPASATVTSAAGTSATISREESGSEDQFLNKRPRLEDRTALDTIKEQTQSGGDLRSSSQPTAASAPQSLSSQRRLVNCPVCQGVVVESQINEHLDRCLEGNKTNLRPRRV.

Position 1 is an N-acetylmethionine (M1). In terms of domain architecture, SprT-like spans 46-213 (LQALFLQFND…KTCGGTYIKI (168 aa)). H112 lines the Zn(2+) pocket. E113 is an active-site residue. Zn(2+) is bound by residues H116 and H131. K231 is subject to N6-acetyllysine. Positions 254 to 262 (FSGKGYVLG) match the SHP-box motif. A Phosphoserine modification is found at S269. Residue K304 forms a Glycyl lysine isopeptide (Lys-Gly) (interchain with G-Cter in SUMO2) linkage. The short motif at 326-333 (QSVLSSYF) is the PIP-box element. K342 is covalently cross-linked (Glycyl lysine isopeptide (Lys-Gly) (interchain with G-Cter in SUMO2); alternate). Residue K342 forms a Glycyl lysine isopeptide (Lys-Gly) (interchain with G-Cter in ubiquitin); alternate linkage. Residues 344 to 459 (FRNVNGSPVK…ASAPQSLSSQ (116 aa)) are disordered. Residues 347–356 (VNGSPVKNGT) show a composition bias toward polar residues. A Glycyl lysine isopeptide (Lys-Gly) (interchain with G-Cter in SUMO2) cross-link involves residue K362. The span at 383–404 (TSKVTAPASATVTSAAGTSATI) shows a compositional bias: low complexity. Position 384 is a phosphoserine (S384). The Nuclear localization signal signature appears at 413–424 (DQFLNKRPRLED). The segment covering 420 to 432 (PRLEDRTALDTIK) has biased composition (basic and acidic residues). K432 is covalently cross-linked (Glycyl lysine isopeptide (Lys-Gly) (interchain with G-Cter in SUMO2)). A compositionally biased stretch (low complexity) spans 442–459 (RSSSQPTAASAPQSLSSQ). A UBZ4-type zinc finger spans residues 462 to 489 (LVNCPVCQGVVVESQINEHLDRCLEGNK). The Zn(2+) site is built by C465, C468, H480, and C484.

The protein belongs to the Spartan family. As to quaternary structure, homodimer. Interacts (VIA PIP-box) with PCNA (when ubiquitinated). Interacts (via its SHP-box) with VCP/p97. Interacts with RAD18. Interacts with KCTD13 and POLD3. Requires Zn(2+) as cofactor. Post-translationally, autocatalytically cleaved in response to double-stranded DNA-binding: autocatalytic cleavage takes place in trans and leads to inactivation. In terms of processing, monoubiquitinated; monoubiquitination promotes exclusion from chromatin. Deubiquitinated by VCPIP1: deubiquitination is required for subsequent acetylation and recruitment to chromatin and DNA damage sites. Acetylated following deubiquitination by VCPIP1, leading to recruitment to chromatin and DNA damage sites. Post-translationally, phosphorylation by CHEK1 promotes recruitment to chromatin.

It is found in the nucleus. The protein resides in the chromosome. With respect to regulation, DNA-binding activates the protease activity: single-stranded DNA-binding specifically activates ability to cleave covalent DNA-protein cross-links (DPCs). In contrast, double-stranded DNA-binding specifically activates autocatalytic cleavage, and subsequent inactivation. DNA-dependent metalloendopeptidase that mediates the proteolytic cleavage of covalent DNA-protein cross-links (DPCs) during DNA synthesis, thereby playing a key role in maintaining genomic integrity. DPCs are highly toxic DNA lesions that interfere with essential chromatin transactions, such as replication and transcription, and which are induced by reactive agents, such as UV light or formaldehyde. Associates with the DNA replication machinery and specifically removes DPCs during DNA synthesis. Catalyzes proteolytic cleavage of the HMCES DNA-protein cross-link following unfolding by the BRIP1/FANCJ helicase. Acts as a pleiotropic protease for DNA-binding proteins cross-linked with DNA, such as TOP1, TOP2A, histones H3 and H4. Mediates degradation of DPCs that are not ubiquitinated, while it is not able to degrade ubiquitinated DPCs. SPRTN activation requires polymerase collision with DPCs followed by helicase bypass of DPCs. Involved in recruitment of VCP/p97 to sites of DNA damage. Also acts as an activator of CHEK1 during normal DNA replication by mediating proteolytic cleavage of CHEK1, thereby promoting CHEK1 removal from chromatin and subsequent activation. Does not activate CHEK1 in response to DNA damage. May also act as a 'reader' of ubiquitinated PCNA: recruited to sites of UV damage and interacts with ubiquitinated PCNA and RAD18, the E3 ubiquitin ligase that monoubiquitinates PCNA. Facilitates chromatin association of RAD18 and is required for efficient PCNA monoubiquitination, promoting a feed-forward loop to enhance PCNA ubiquitination and translesion DNA synthesis. The chain is DNA-dependent metalloprotease SPRTN from Mus musculus (Mouse).